Reading from the N-terminus, the 502-residue chain is Ubiquilin (502 aa).

The Ubiquitin-like domain maps to I8–R83. Over residues P84 to P115 the composition is skewed to low complexity. A disordered region spans residues P84 to R136. STI1 domains follow at residues S124–I157 and N161–M200. A compositionally biased stretch (polar residues) spans S235–D251. Positions S235–S294 are disordered. Residues Q252–G262 show a composition bias toward basic and acidic residues. The span at A274–A290 shows a compositional bias: low complexity. 2 consecutive STI1 domains span residues S289–I327 and N351–F387. Residues P455 to S501 enclose the UBA domain.

In terms of tissue distribution, expressed in the pharynx, hypodermis, intestine and head neurons. Upon ER stress, expressed predominantly in pharyngeal muscle, hypodermis and intestine.

Functionally, may play a role in the ER-associated protein degradation pathway (ERAD) possibly via its interaction with ER-localized proteins ubxn-4 and cdc-48.1 and/or cdc48.2, providing a link between the polyubiquitinated ERAD substrates and the proteasome. Also plays an important role in the regulation of other protein degradation mechanisms and pathways including ubiquitin-proteasome system (UPS) and autophagy. Mediates the proteasomal targeting of misfolded or accumulated proteins for degradation by binding (via UBA domain) to their polyubiquitin chains and by interacting (via ubiquitin-like domain) with the subunits of the proteasome. Collaborates with POST (F36D4.5) in the export of ubiquitinated proteins from the nucleus to the cytoplasm. Also acts as a regulator of DNA repair by inhibiting homologous recombination repair, thereby redirecting double-strand break repair toward non-homologous end joining (NHEJ). This is Ubiquilin from Caenorhabditis elegans.